The sequence spans 253 residues: Large ribosomal subunit protein uL4 (253 aa).

The tract at residues 61 to 107 is disordered; the sequence is GWGSGRGTSHVPRLVNSSRAARVPHARGGRRAHPPKPEADRSEKVNT. Positions 82-94 are enriched in basic residues; that stretch reads RVPHARGGRRAHP. A compositionally biased stretch (basic and acidic residues) spans 95 to 107; it reads PKPEADRSEKVNT.

Belongs to the universal ribosomal protein uL4 family. As to quaternary structure, part of the 50S ribosomal subunit.

One of the primary rRNA binding proteins, this protein initially binds near the 5'-end of the 23S rRNA. It is important during the early stages of 50S assembly. It makes multiple contacts with different domains of the 23S rRNA in the assembled 50S subunit and ribosome. Functionally, forms part of the polypeptide exit tunnel. The chain is Large ribosomal subunit protein uL4 from Methanosarcina barkeri (strain Fusaro / DSM 804).